We begin with the raw amino-acid sequence, 417 residues long: NADH-quinone oxidoreductase subunit D (417 aa).

It belongs to the complex I 49 kDa subunit family. As to quaternary structure, NDH-1 is composed of 14 different subunits. Subunits NuoB, C, D, E, F, and G constitute the peripheral sector of the complex.

It localises to the cell inner membrane. It catalyses the reaction a quinone + NADH + 5 H(+)(in) = a quinol + NAD(+) + 4 H(+)(out). Functionally, NDH-1 shuttles electrons from NADH, via FMN and iron-sulfur (Fe-S) centers, to quinones in the respiratory chain. The immediate electron acceptor for the enzyme in this species is believed to be ubiquinone. Couples the redox reaction to proton translocation (for every two electrons transferred, four hydrogen ions are translocated across the cytoplasmic membrane), and thus conserves the redox energy in a proton gradient. This is NADH-quinone oxidoreductase subunit D from Methylibium petroleiphilum (strain ATCC BAA-1232 / LMG 22953 / PM1).